The primary structure comprises 205 residues: Beta-crystallin B2 (205 aa).

At Ala-2 the chain carries N-acetylalanine. The segment at 2–16 (ASDHQTQAGKPQPLN) is N-terminal arm. Beta/gamma crystallin 'Greek key' domains follow at residues 17 to 56 (PKII…LVQA) and 57 to 101 (GPWV…RPIK). Residues 102-106 (VDSQE) are connecting peptide. Beta/gamma crystallin 'Greek key' domains follow at residues 107 to 148 (HKII…RVQS) and 149 to 191 (GTWV…RRIR). Positions 193–205 (MQWHQRGAFHPTN) are C-terminal arm.

Belongs to the beta/gamma-crystallin family. Homo/heterodimer, or complexes of higher-order. The structure of beta-crystallin oligomers seems to be stabilized through interactions between the N-terminal arms.

Crystallins are the dominant structural components of the vertebrate eye lens. This chain is Beta-crystallin B2 (CRYBB2), found in Oryctolagus cuniculus (Rabbit).